Consider the following 372-residue polypeptide: DNA replication and repair protein RecF (372 aa).

Position 30-37 (Gly-30–Thr-37) interacts with ATP.

Belongs to the RecF family.

The protein resides in the cytoplasm. The RecF protein is involved in DNA metabolism; it is required for DNA replication and normal SOS inducibility. RecF binds preferentially to single-stranded, linear DNA. It also seems to bind ATP. This chain is DNA replication and repair protein RecF, found in Geobacillus kaustophilus (strain HTA426).